Reading from the N-terminus, the 819-residue chain is Zinc finger protein 658B (819 aa).

Residues 141 to 166 (YLSDEHGKCRKSFYWKAHLIQHERPH) form a C2H2-type 1; degenerate zinc finger. 14 consecutive C2H2-type zinc fingers follow at residues 200–222 (YECN…LRIH), 278–300 (YECI…QRIH), 306–328 (YECV…QRVH), 334–356 (YECN…QRIH), 362–384 (YECS…HRIH), 390–412 (YECN…QRIH), 418–440 (YECN…QRIH), 446–468 (YECS…QRIH), 474–496 (YKCN…QNIH), 502–524 (YECS…RRIH), 530–552 (YECS…ERIH), 558–580 (YECN…QRIH), 586–608 (YECN…QRIH), and 614–636 (YECN…HRIH). The segment at 642–664 (YECNDCGKTFSKTSHLRAHLRTR) adopts a C2H2-type 16; degenerate zinc-finger fold. C2H2-type zinc fingers lie at residues 670–692 (YECS…QRVH), 698–720 (YECN…QRIH), 726–748 (YECN…QRIH), 754–776 (YECN…QRIH), and 782–805 (YECD…TRMH).

The protein belongs to the krueppel C2H2-type zinc-finger protein family.

The protein localises to the nucleus. In terms of biological role, may be involved in transcriptional regulation. The protein is Zinc finger protein 658B (ZNF658B) of Homo sapiens (Human).